A 271-amino-acid chain; its full sequence is Methylcorrinoid:tetrahydrofolate methyltransferase (271 aa).

Positions 1 to 247 (MIIIGEKLNG…GAIFATDALL (247 aa)) constitute a Pterin-binding domain.

Belongs to the vitamin-B12 dependent methionine synthase family. As to quaternary structure, the proline betaine:THF methyl transfer system is composed of two methyltransferases, MtpB and MtqA, and the corrinoid protein MtqC. The L-carnitine:THF methyl transfer system is composed of two methyltransferases, MtcB and MtqA, and the corrinoid protein MtqC.

It catalyses the reaction methyl-Co(III)-[quaternary-amine-specific corrinoid protein] + (6S)-5,6,7,8-tetrahydrofolate = Co(I)-[quaternary-amine-specific corrinoid protein] + (6S)-5-methyl-5,6,7,8-tetrahydrofolate + H(+). In terms of biological role, involved in the degradation of the quaternary amines L-proline betaine and L-carnitine. Component of a corrinoid-dependent methyltransferase system that transfers a methyl group from L-proline betaine or L-carnitine to tetrahydrofolate (THF), forming methyl-THF, a key intermediate in the Wood-Ljungdahl acetogenesis pathway. MtqA catalyzes the transfer of a methyl group from the methylated corrinoid protein MtqC to THF, forming methyl-THF. This is Methylcorrinoid:tetrahydrofolate methyltransferase from Eubacterium limosum.